The chain runs to 162 residues: NADH-ubiquinone oxidoreductase chain 6 (162 aa).

4 helical membrane passes run M1–L21, F46–V66, E84–I104, and G130–L150.

Belongs to the complex I subunit 6 family.

The protein resides in the mitochondrion membrane. It carries out the reaction a ubiquinone + NADH + 5 H(+)(in) = a ubiquinol + NAD(+) + 4 H(+)(out). In terms of biological role, core subunit of the mitochondrial membrane respiratory chain NADH dehydrogenase (Complex I) that is believed to belong to the minimal assembly required for catalysis. Complex I functions in the transfer of electrons from NADH to the respiratory chain. The immediate electron acceptor for the enzyme is believed to be ubiquinone. In Patiria pectinifera (Starfish), this protein is NADH-ubiquinone oxidoreductase chain 6 (ND6).